A 191-amino-acid polypeptide reads, in one-letter code: Holliday junction branch migration complex subunit RuvA (191 aa).

The segment at 1-64 (MIRGVRGTLV…EDELALYGFA (64 aa)) is domain I. A domain II region spans residues 65–136 (TEAELELFLS…ELRGRLPALT (72 aa)). Residues 136–139 (TEVQ) are flexible linker. A domain III region spans residues 140-191 (AGEPIDQELVAALQALGYTAQEARQAATHPEVRRAPSLEERIVAALRQLAPP).

The protein belongs to the RuvA family. In terms of assembly, homotetramer. Forms an RuvA(8)-RuvB(12)-Holliday junction (HJ) complex. HJ DNA is sandwiched between 2 RuvA tetramers; dsDNA enters through RuvA and exits via RuvB. An RuvB hexamer assembles on each DNA strand where it exits the tetramer. Each RuvB hexamer is contacted by two RuvA subunits (via domain III) on 2 adjacent RuvB subunits; this complex drives branch migration. In the full resolvosome a probable DNA-RuvA(4)-RuvB(12)-RuvC(2) complex forms which resolves the HJ.

The protein localises to the cytoplasm. Functionally, the RuvA-RuvB-RuvC complex processes Holliday junction (HJ) DNA during genetic recombination and DNA repair, while the RuvA-RuvB complex plays an important role in the rescue of blocked DNA replication forks via replication fork reversal (RFR). RuvA specifically binds to HJ cruciform DNA, conferring on it an open structure. The RuvB hexamer acts as an ATP-dependent pump, pulling dsDNA into and through the RuvAB complex. HJ branch migration allows RuvC to scan DNA until it finds its consensus sequence, where it cleaves and resolves the cruciform DNA. This chain is Holliday junction branch migration complex subunit RuvA, found in Thermomicrobium roseum (strain ATCC 27502 / DSM 5159 / P-2).